A 1876-amino-acid chain; its full sequence is Phenolphthiocerol/phthiocerol polyketide synthase subunit A (1876 aa).

Residue threonine 2 is modified to N-acetylthreonine. The Carrier 1 domain maps to 9–83; that stretch reads ADLRHWLIDY…ALAAYLAAPE (75 aa). Residue serine 43 is modified to O-(pantetheine 4'-phosphoryl)serine. A Ketosynthase family 3 (KS3) domain is found at 101 to 526; it reads DEPIAVVGMG…GTNAHVVIEQ (426 aa). Catalysis depends on for beta-ketoacyl synthase activity residues cysteine 273, histidine 408, and histidine 448. Residues 626-950 are acyltransferase; the sequence is SPGPGTVFVY…NLNKAHTIHP (325 aa). Serine 720 functions as the For malonyltransferase activity in the catalytic mechanism. Residues 997–1112 form an N-terminal hotdog fold region; the sequence is HTTVATVSAS…AQLSSSPSDS (116 aa). A PKS/mFAS DH domain is found at 997-1267; the sequence is HTTVATVSAS…YRALDFGLDV (271 aa). Histidine 1027 (proton acceptor; for dehydratase activity) is an active-site residue. The segment at 1102 to 1130 is disordered; it reads TAQLSSSPSDSASSLNEHHRANGQPPERA. Over residues 1106–1115 the composition is skewed to low complexity; that stretch reads SSSPSDSASS. The tract at residues 1130–1267 is C-terminal hotdog fold; it reads AHRDLIPDLA…YRALDFGLDV (138 aa). The Proton donor; for dehydratase activity role is filled by aspartate 1186. NADP(+) is bound at residue 1491 to 1551; it reads AAYLITGGLG…RRRIDAIRAL (61 aa). The interval 1491–1728 is beta-ketoacyl reductase; the sequence is AAYLITGGLG…DGYDVAQAVV (238 aa). Positions 1759–1836 constitute a Carrier 2 domain; the sequence is EVRSELEQGL…SLASYLAKRV (78 aa). Serine 1796 carries the post-translational modification O-(pantetheine 4'-phosphoryl)serine.

NADP(+) serves as cofactor. Requires pantetheine 4'-phosphate as cofactor.

The catalysed reaction is icosanoyl-[(phenol)carboxyphthiodiolenone synthase] + 2 (S)-methylmalonyl-CoA + 3 malonyl-CoA + 5 NADPH + 10 H(+) = C32-carboxyphthiodiolenone-[(phenol)carboxyphthiodiolenone synthase] + 5 CO2 + 5 NADP(+) + 5 CoA + 2 H2O. It carries out the reaction docosanoyl-[(phenol)carboxyphthiodiolenone synthase] + 2 (S)-methylmalonyl-CoA + 3 malonyl-CoA + 5 NADPH + 10 H(+) = C34-carboxyphthiodiolenone-[(phenol)carboxyphthiodiolenone synthase] + 5 CO2 + 5 NADP(+) + 5 CoA + 2 H2O. It catalyses the reaction 17-(4-hydroxyphenyl)heptadecanoyl-[(phenol)carboxyphthiodiolenone synthase] + 2 (S)-methylmalonyl-CoA + 3 malonyl-CoA + 5 NADPH + 10 H(+) = C35-(phenol)carboxyphthiodiolenone-[(phenol)carboxyphthiodiolenone synthase] + 5 CO2 + 5 NADP(+) + 5 CoA + 2 H2O. The enzyme catalyses 19-(4-hydroxyphenyl)nonadecanoyl-[(phenol)carboxyphthiodiolenone synthase] + 2 (S)-methylmalonyl-CoA + 3 malonyl-CoA + 5 NADPH + 10 H(+) = C37-(phenol)carboxyphthiodiolenone-[(phenol)carboxyphthiodiolenone synthase] + 5 CO2 + 5 NADP(+) + 5 CoA + 2 H2O. The protein operates within lipid metabolism; fatty acid biosynthesis. Its function is as follows. Part of the PpsABCDE complex involved in the biosynthesis of the lipid core common to phthiocerols and phenolphthiocerols by successive additions of malonyl-CoA or methylmalonyl-CoA extender units. PpsA can accept as substrate the activated forms of either icosanoyl (C20), docosanoyl (C22) or lignoceroyl (C24) groups from FadD26, or a (4-hydroxyphenyl)-C17 or (4-hydroxyphenyl)-C19 fatty acyl from FadD29. PpsA initiates the biosynthesis and extends its substrate using a malonyl-CoA extender unit. The PpsB and PpsC proteins add the second and third malonyl-CoA extender units. PpsD adds an (R)-methylmalonyl unit and PpsE adds a second (R)-methylmalonyl unit. The incorporation of the methylmalonyl units results in formation of two branched methyl groups in the elongated product. In Mycobacterium tuberculosis (strain ATCC 25618 / H37Rv), this protein is Phenolphthiocerol/phthiocerol polyketide synthase subunit A (ppsA).